Reading from the N-terminus, the 436-residue chain is Histidinol dehydrogenase (436 aa).

Residues threonine 240, glutamine 262, and histidine 265 each coordinate substrate. Zn(2+) is bound by residues glutamine 262 and histidine 265. Residues glutamate 331 and histidine 332 each act as proton acceptor in the active site. Residues histidine 332, aspartate 365, glutamate 419, and histidine 424 each coordinate substrate. Position 365 (aspartate 365) interacts with Zn(2+). A Zn(2+)-binding site is contributed by histidine 424.

It belongs to the histidinol dehydrogenase family. Zn(2+) is required as a cofactor.

The enzyme catalyses L-histidinol + 2 NAD(+) + H2O = L-histidine + 2 NADH + 3 H(+). The protein operates within amino-acid biosynthesis; L-histidine biosynthesis; L-histidine from 5-phospho-alpha-D-ribose 1-diphosphate: step 9/9. In terms of biological role, catalyzes the sequential NAD-dependent oxidations of L-histidinol to L-histidinaldehyde and then to L-histidine. The sequence is that of Histidinol dehydrogenase from Leifsonia xyli subsp. xyli (strain CTCB07).